Here is a 238-residue protein sequence, read N- to C-terminus: N-(5'-phosphoribosyl)anthranilate isomerase (238 aa).

This sequence belongs to the TrpF family.

The enzyme catalyses N-(5-phospho-beta-D-ribosyl)anthranilate = 1-(2-carboxyphenylamino)-1-deoxy-D-ribulose 5-phosphate. The protein operates within amino-acid biosynthesis; L-tryptophan biosynthesis; L-tryptophan from chorismate: step 3/5. The chain is N-(5'-phosphoribosyl)anthranilate isomerase from Methanosarcina acetivorans (strain ATCC 35395 / DSM 2834 / JCM 12185 / C2A).